A 124-amino-acid polypeptide reads, in one-letter code: Ribonuclease pancreatic (124 aa).

Residues 1-13 (KESAAAKFERQHM) are compositionally biased toward basic and acidic residues. Positions 1-23 (KESAAAKFERQHMDPSASSISSS) are disordered. Substrate is bound by residues K7 and R10. H12 functions as the Proton acceptor in the catalytic mechanism. 4 disulfide bridges follow: C26-C84, C40-C95, C58-C110, and C65-C72. Residue N34 is glycosylated (N-linked (GlcNAc...) asparagine). Substrate contacts are provided by residues 41 to 45 (KPVNT), K66, and R85. H119 serves as the catalytic Proton donor.

This sequence belongs to the pancreatic ribonuclease family. As to quaternary structure, monomer. Interacts with and forms tight 1:1 complexes with RNH1. Dimerization of two such complexes may occur. Interaction with RNH1 inhibits this protein. Pancreas.

Its subcellular location is the secreted. The catalysed reaction is an [RNA] containing cytidine + H2O = an [RNA]-3'-cytidine-3'-phosphate + a 5'-hydroxy-ribonucleotide-3'-[RNA].. It catalyses the reaction an [RNA] containing uridine + H2O = an [RNA]-3'-uridine-3'-phosphate + a 5'-hydroxy-ribonucleotide-3'-[RNA].. Its function is as follows. Endonuclease that catalyzes the cleavage of RNA on the 3' side of pyrimidine nucleotides. Acts on single-stranded and double-stranded RNA. The sequence is that of Ribonuclease pancreatic (RNASE1) from Alces alces alces (European moose).